The primary structure comprises 534 residues: Inosine-5'-monophosphate dehydrogenase (534 aa).

2 consecutive CBS domains span residues 117–181 (YVMQ…GTPI) and 190–255 (TTPI…PMAS). NAD(+)-binding positions include 292–294 (DSS) and 342–344 (GMG). 2 residues coordinate K(+): Gly-344 and Gly-346. Ser-347 lines the IMP pocket. Cys-349 contacts K(+). Catalysis depends on Cys-349, which acts as the Thioimidate intermediate. IMP-binding positions include 382-384 (DGG), 405-406 (GG), and 430-434 (YRGMG). Catalysis depends on Arg-448, which acts as the Proton acceptor. Gln-461 serves as a coordination point for IMP. K(+) is bound by residues Glu-520, Gly-521, and Gly-522.

Belongs to the IMPDH/GMPR family. As to quaternary structure, homotetramer. The cofactor is K(+).

It localises to the cytoplasm. The enzyme catalyses IMP + NAD(+) + H2O = XMP + NADH + H(+). Its pathway is purine metabolism; XMP biosynthesis via de novo pathway; XMP from IMP: step 1/1. Its activity is regulated as follows. Mycophenolic acid (MPA) is a non-competitive inhibitor that prevents formation of the closed enzyme conformation by binding to the same site as the amobile flap. In contrast, mizoribine monophosphate (MZP) is a competitive inhibitor that induces the closed conformation. MPA is a potent inhibitor of mammalian IMPDHs but a poor inhibitor of the bacterial enzymes. MZP is a more potent inhibitor of bacterial IMPDH. Its function is as follows. Catalyzes the conversion of inosine 5'-phosphate (IMP) to xanthosine 5'-phosphate (XMP), the first committed and rate-limiting step in the de novo synthesis of guanine nucleotides, and therefore plays an important role in the regulation of cell growth. This chain is Inosine-5'-monophosphate dehydrogenase, found in Caenorhabditis elegans.